The chain runs to 85 residues: Large ribosomal subunit protein bL27 (85 aa).

A disordered region spans residues 1–26; the sequence is MAHKKAGGSTRNGRDSESKRLGVKRF.

Belongs to the bacterial ribosomal protein bL27 family.

This is Large ribosomal subunit protein bL27 from Saccharophagus degradans (strain 2-40 / ATCC 43961 / DSM 17024).